The following is a 662-amino-acid chain: MSDLFSFNKEKKTKIINNTYSAKDIEVLEGLEPVRKRPGMYIGGTDLNAMHHLVSEVLDNSMDEAVAGFASIITIKMHQDHSITISDNGRGIPIDNHPKFPNKSALEVILTTLHSGGKFSSNVYQTAGGLHGVGVSVVNALAEHLEIKVYKQGKLYKQSYAKGEKLTELICEEAPKRLKGTSINFIPDPEIFGDKIHFNPKKVYELARSKAYLYRGVTIEWECEIEASSDVPKKALINFPNGLKDYLSSKITPDDLITTEIFSGNVESEQDGIKLEWAICWQNNDSSAFIQSYCNTVPTPLGGTHEQGLKSALLRGLKAYGEMVGNKKTANLAIEDILETASVVLSIFIAEPTFQGQTKEKLVSQGVSKPAENIIKDHFDHFLSSNKTIANNLLEHFIAIAEFRLNKKNEKTISRKNATQKLRLPGKLADCTRTSPEGTELFIVEGDSAGGSAKQARNRETQAVLPLWGKVLNVASSTLEKIVNNQAIQDLEIALACGSMKNYKKENLRYEKIIIMTDADVDGAHIASLLMTFFFLRMPKLVEDGHLYLAKPPLYRLTQSNKTYYANDEEEKAKLTDKLSKSSKAKIEVGRFKGLGEMMPMQLKETTMHPEKRSLLKVTLEDFQNVDKIVDDLMGKKPEKRFQFIYEQALVKMDKIINELDI.

Residues Tyr-20, Asn-60, Asp-87, 129–135, and Lys-359 each bind ATP; that span reads GLHGVGV. The region spanning 439–553 is the Toprim domain; the sequence is TELFIVEGDS…DGHLYLAKPP (115 aa). Residues Glu-445, Asp-518, and Asp-520 each coordinate Mg(2+).

Belongs to the type II topoisomerase family. ParE type 1 subfamily. As to quaternary structure, heterotetramer composed of ParC and ParE. Mg(2+) is required as a cofactor. The cofactor is Mn(2+). Ca(2+) serves as cofactor.

The enzyme catalyses ATP-dependent breakage, passage and rejoining of double-stranded DNA.. In terms of biological role, topoisomerase IV is essential for chromosome segregation. It relaxes supercoiled DNA. Performs the decatenation events required during the replication of a circular DNA molecule. This chain is DNA topoisomerase 4 subunit B, found in Rickettsia bellii (strain RML369-C).